A 280-amino-acid chain; its full sequence is uncharacterized protein (280 aa).

Residues 26–127 (YFMSMKLLDV…TRVSILMRYY (102 aa)) form the KilA-N domain.

This is an uncharacterized protein from Vertebrata (FPV).